Here is a 443-residue protein sequence, read N- to C-terminus: Alpha-amylase (443 aa).

Residues 1–24 form the signal peptide; it reads MHNTLFRTALLAAALGSFSHTASA. 2 residues coordinate substrate: histidine 114 and arginine 196. Aspartate 198 functions as the Nucleophile in the catalytic mechanism. 201–202 is a binding site for substrate; that stretch reads KH. The active-site Proton donor is glutamate 223. The substrate site is built by glycine 228 and histidine 287.

Belongs to the glycosyl hydrolase 13 family.

The protein localises to the secreted. It catalyses the reaction Endohydrolysis of (1-&gt;4)-alpha-D-glucosidic linkages in polysaccharides containing three or more (1-&gt;4)-alpha-linked D-glucose units.. This chain is Alpha-amylase (amyA), found in Aeromonas hydrophila.